Consider the following 411-residue polypeptide: Protein phosphatase 1 regulatory subunit 36 (411 aa).

As to quaternary structure, interacts with PPP1CA.

Functionally, inhibits phosphatase activity of protein phosphatase 1 (PP1) complexes. The polypeptide is Protein phosphatase 1 regulatory subunit 36 (Ppp1r36) (Rattus norvegicus (Rat)).